The chain runs to 313 residues: MNDTVHKHITVLLHEAVDGLAIKPNGIYIDGTFGRGGHSRLILSKLSEQGRLIATDRDPRAIAEANTIDDTRFQIVHTAFSAIPDVCEQLGLTGKIDGILLDLGVSSPQLDDAERGFSFMRDGPLDMRMDTTKGLSAAEWLAQVSADDLAWVLKTFGEERFAKRIAQAVVSYNKSVTDKISRTLQLAQIIADAVPFKDKHKHPATRSFQAIRIFINSELDELEKALQSALSVLAPEGRLSIISFHSLEDRMVKQFMKKNSKGMDVPKGLPILESELNKNIPLKIIGKAIMPSEAEIEANPRSRSAVLRIAEKR.

S-adenosyl-L-methionine-binding positions include 36–38 (GGH), Asp-56, Phe-80, Asp-102, and Gln-109.

This sequence belongs to the methyltransferase superfamily. RsmH family.

Its subcellular location is the cytoplasm. The catalysed reaction is cytidine(1402) in 16S rRNA + S-adenosyl-L-methionine = N(4)-methylcytidine(1402) in 16S rRNA + S-adenosyl-L-homocysteine + H(+). Its function is as follows. Specifically methylates the N4 position of cytidine in position 1402 (C1402) of 16S rRNA. The protein is Ribosomal RNA small subunit methyltransferase H of Actinobacillus pleuropneumoniae serotype 3 (strain JL03).